A 474-amino-acid chain; its full sequence is Trigger factor (474 aa).

A PPIase FKBP-type domain is found at 174–261 (GDIAVVSFKG…LKDLKEKELP (88 aa)). The tract at residues 435-474 (VKEKTTKTSKATKTSKTTKATKTASKTTKTTKTQNKKEKK) is disordered. The segment covering 442-467 (TSKATKTSKTTKATKTASKTTKTTKT) has biased composition (low complexity).

Belongs to the FKBP-type PPIase family. Tig subfamily.

It is found in the cytoplasm. It carries out the reaction [protein]-peptidylproline (omega=180) = [protein]-peptidylproline (omega=0). Involved in protein export. Acts as a chaperone by maintaining the newly synthesized protein in an open conformation. Functions as a peptidyl-prolyl cis-trans isomerase. This is Trigger factor from Prochlorococcus marinus (strain AS9601).